A 1002-amino-acid polypeptide reads, in one-letter code: UPF0182 protein Mvan_1814 (1002 aa).

Helical transmembrane passes span 16–36 (VMIA…RLVD), 61–81 (LLLF…AMAL), 112–132 (LVGI…AQNY), 174–194 (FAAT…FGGI), 209–229 (IQLI…YWLD), 258–278 (KLIL…AIVL), and 286–306 (IGVV…PLVV). Residues 891-958 (LFGPGADATA…TGPTQLSAGK (68 aa)) form a disordered region. Residues 893-923 (GPGADATATGPAATEPPAGQAPQPQGNNQPP) are compositionally biased toward low complexity. Pro residues predominate over residues 937-950 (PQQPEVPVAVPPTG).

It belongs to the UPF0182 family.

The protein resides in the cell membrane. The polypeptide is UPF0182 protein Mvan_1814 (Mycolicibacterium vanbaalenii (strain DSM 7251 / JCM 13017 / BCRC 16820 / KCTC 9966 / NRRL B-24157 / PYR-1) (Mycobacterium vanbaalenii)).